Here is a 307-residue protein sequence, read N- to C-terminus: MTSVEQRTATAVFSRTGSRMAERRLAFMLVAPAAMLMVAVTAYPIGYALWLSLQRNNLATPNDTAFIGLGNYHTILIDRYWWTALAVTLAITAVSVTIEFVLGLALALVMHRTLIGKGLVRTAVLIPYGIVTVVASYSWYYAWTPGTGYLANLLPYDSAPLTQQIPSLGIVVIAEVWKTTPFMSLLLLAGLALVPEDLLRAAQVDGASAWRRLTKVILPMIKPAIVVALLFRTLDAFRIFDNIYVLTGGSNNTGSVSILGYDNLFKGFNVGLGSAISVLIFGCVAVIAFIFIKLFGAAAPGGEPSGR.

6 consecutive transmembrane segments (helical) span residues 25–45, 89–109, 123–143, 168–188, 217–237, and 272–292; these read LAFMLVAPAAMLMVAVTAYPI, LAITAVSVTIEFVLGLALALV, AVLIPYGIVTVVASYSWYYAW, LGIVVIAEVWKTTPFMSLLLL, ILPMIKPAIVVALLFRTLDAF, and LGSAISVLIFGCVAVIAFIFI. An ABC transmembrane type-1 domain is found at 85 to 291; sequence LAVTLAITAV…GCVAVIAFIF (207 aa).

This sequence belongs to the binding-protein-dependent transport system permease family. The complex is composed of two ATP-binding proteins (SugC), two transmembrane proteins (Suga and SugB) and a solute-binding protein (LpqY).

The protein localises to the cell inner membrane. In terms of biological role, part of the ABC transporter complex LpqY-SugA-SugB-SugC, which is highly specific for uptake of trehalose. Involved in the recycling of extracellular trehalose released from trehalose-containing molecules synthesized by M.tuberculosis. Trehalose uptake is essential for virulence. Probably responsible for the translocation of the substrate across the membrane. This is Trehalose transport system permease protein SugA (sugA) from Mycobacterium tuberculosis (strain CDC 1551 / Oshkosh).